We begin with the raw amino-acid sequence, 674 residues long: Probable copper-transporting P-type ATPase B (674 aa).

A disordered region spans residues 1 to 22; sequence MNHSNQMHHDNHASHDHHSGHA. The span at 7-19 shows a compositional bias: basic and acidic residues; the sequence is MHHDNHASHDHHS. A run of 6 helical transmembrane segments spans residues 32–52, 57–77, 95–115, 127–147, 284–304, and 315–335; these read FFVS…MGVN, FTFP…FFYG, GMMT…LYAF, TMDF…GHWI, GYLF…WMLI, and LVTV…PLVT. Catalysis depends on Asp-367, which acts as the 4-aspartylphosphate intermediate. Asp-565 and Asp-569 together coordinate Mg(2+). 2 helical membrane-spanning segments follow: residues 623-645 and 649-671; these read LWWG…AFIG and SPAI…AFTL.

The protein belongs to the cation transport ATPase (P-type) (TC 3.A.3) family. Type IB subfamily.

The protein localises to the cell membrane. The catalysed reaction is Cu(+)(in) + ATP + H2O = Cu(+)(out) + ADP + phosphate + H(+). In terms of biological role, involved in copper transport. The protein is Probable copper-transporting P-type ATPase B (copB) of Staphylococcus aureus (strain USA300 / TCH1516).